Consider the following 455-residue polypeptide: MSLDIVILAAGQGTRMRSALPKVLHPVAGNSMLGHVIHSARQLSPSGIHVVIGHGADAVREQLSADDLNFVMQDKQLGTGHAVAQALPALTADTVLILYGDVPLIEVETLSRLLERVNPQQLGLLTVALDDPTGYGRIVRDDQNRVCAIVEHKDASDAQKAITEGNTGILAVPAAHLADWLGRLSNNNAQGEYYLTDVIAMAANDGLVVATEQPHDAMEVQGANDRKQLSELERHYQMREARRLMAAGVTLRDPARFDVRGEVIVGRDVLIDINVILEGKVVIEDDVVIGPNCVIKDSTLRKGVVVKANSHIEGAILGEGSDAGPFARLRPGSVLGAKAHVGNFVELKNANLGEGAKVGHLTYLGDAEIGARTNIGAGTITCNYDGANKHKTTLGADVFIGSNNSLVAPVDILDGATTAAGSTITQNVPAEQLGVARARQRNIEGWKRPVKISKD.

Residues 1-226 are pyrophosphorylase; sequence MSLDIVILAA…AMEVQGANDR (226 aa). Residues 8-11, Lys22, Gln73, 78-79, 99-101, Gly136, Glu151, Asn166, and Asn224 contribute to the UDP-N-acetyl-alpha-D-glucosamine site; these read LAAG, GT, and YGD. Residue Asp101 participates in Mg(2+) binding. Position 224 (Asn224) interacts with Mg(2+). The tract at residues 227-247 is linker; the sequence is KQLSELERHYQMREARRLMAA. Positions 248 to 455 are N-acetyltransferase; that stretch reads GVTLRDPARF…WKRPVKISKD (208 aa). UDP-N-acetyl-alpha-D-glucosamine-binding residues include Arg330 and Lys348. The Proton acceptor role is filled by His360. 2 residues coordinate UDP-N-acetyl-alpha-D-glucosamine: Tyr363 and Asn374. Acetyl-CoA contacts are provided by residues Ala377, 383–384, Ser402, Ala420, and Arg437; that span reads NY.

In the N-terminal section; belongs to the N-acetylglucosamine-1-phosphate uridyltransferase family. The protein in the C-terminal section; belongs to the transferase hexapeptide repeat family. Homotrimer. The cofactor is Mg(2+).

It localises to the cytoplasm. The catalysed reaction is alpha-D-glucosamine 1-phosphate + acetyl-CoA = N-acetyl-alpha-D-glucosamine 1-phosphate + CoA + H(+). It carries out the reaction N-acetyl-alpha-D-glucosamine 1-phosphate + UTP + H(+) = UDP-N-acetyl-alpha-D-glucosamine + diphosphate. It functions in the pathway nucleotide-sugar biosynthesis; UDP-N-acetyl-alpha-D-glucosamine biosynthesis; N-acetyl-alpha-D-glucosamine 1-phosphate from alpha-D-glucosamine 6-phosphate (route II): step 2/2. The protein operates within nucleotide-sugar biosynthesis; UDP-N-acetyl-alpha-D-glucosamine biosynthesis; UDP-N-acetyl-alpha-D-glucosamine from N-acetyl-alpha-D-glucosamine 1-phosphate: step 1/1. It participates in bacterial outer membrane biogenesis; LPS lipid A biosynthesis. Catalyzes the last two sequential reactions in the de novo biosynthetic pathway for UDP-N-acetylglucosamine (UDP-GlcNAc). The C-terminal domain catalyzes the transfer of acetyl group from acetyl coenzyme A to glucosamine-1-phosphate (GlcN-1-P) to produce N-acetylglucosamine-1-phosphate (GlcNAc-1-P), which is converted into UDP-GlcNAc by the transfer of uridine 5-monophosphate (from uridine 5-triphosphate), a reaction catalyzed by the N-terminal domain. The chain is Bifunctional protein GlmU from Pseudomonas syringae pv. syringae (strain B728a).